Consider the following 495-residue polypeptide: EF-hand calcium-binding domain-containing protein 14 (495 aa).

2 disordered regions span residues 1–50 (MKKR…EEEE) and 381–404 (TNKP…FTSK). Ser-17 bears the Phosphoserine mark. Residues 18–31 (RRKKPKKGPSSHRL) are compositionally biased toward basic residues. Acidic residues predominate over residues 37-50 (PDSDSESSSEEEEE). EF-hand domains lie at 434 to 463 (SSTE…WTSL) and 464 to 495 (GSAM…ALGI). Residues Asp-477, Asp-479, Asp-481, Arg-483, and Glu-488 each coordinate Ca(2+).

This chain is EF-hand calcium-binding domain-containing protein 14 (EFCAB14), found in Homo sapiens (Human).